A 605-amino-acid chain; its full sequence is Protein Spindly (605 aa).

Methionine 1 carries the N-acetylmethionine modification. Residues 2-442 (EADIITNLRC…ELKLKYEPEE (441 aa)) adopt a coiled-coil conformation. A phosphoserine mark is found at serine 513, serine 515, and serine 555. The tract at residues 544 to 580 (ALSERSGNTPNSPRLAAESKLQTEVKEGKETSSKLEK) is disordered. Basic and acidic residues predominate over residues 564 to 580 (LQTEVKEGKETSSKLEK).

The protein belongs to the Spindly family. Interacts with KNTC1 and ZW10. These interactions appear weak and may be transient or indirect. Interacts with dynein intermediate chain and dynactin (DCTN1). Interacts with the catalytically active form of USP45. In terms of processing, monoubiquitinated with'Lys-48' linkage. Deubiquitinated by USP45.

The protein resides in the cytoplasm. Its subcellular location is the cytoskeleton. It is found in the microtubule organizing center. It localises to the centrosome. The protein localises to the chromosome. The protein resides in the centromere. Its subcellular location is the kinetochore. It is found in the nucleus. It localises to the spindle pole. Required for the localization of dynein and dynactin to the mitotic kintochore. Dynein is believed to control the initial lateral interaction between the kinetochore and spindle microtubules and to facilitate the subsequent formation of end-on kinetochore-microtubule attachments mediated by the NDC80 complex. Also required for correct spindle orientation. Does not appear to be required for the removal of spindle assembly checkpoint (SAC) proteins from the kinetochore upon bipolar spindle attachment. Acts as an adapter protein linking the dynein motor complex to various cargos and converts dynein from a non-processive to a highly processive motor in the presence of dynactin. Facilitates the interaction between dynein and dynactin and activates dynein processivity (the ability to move along a microtubule for a long distance without falling off the track). Plays a role in cell migration. In Homo sapiens (Human), this protein is Protein Spindly.